Here is a 334-residue protein sequence, read N- to C-terminus: Beta-hexosaminidase (334 aa).

Residues aspartate 60, arginine 68, arginine 133, and 163–164 each bind substrate; that span reads KH. The Proton donor/acceptor role is filled by histidine 176. The Nucleophile role is filled by aspartate 247.

Belongs to the glycosyl hydrolase 3 family. NagZ subfamily.

It localises to the cytoplasm. It carries out the reaction Hydrolysis of terminal non-reducing N-acetyl-D-hexosamine residues in N-acetyl-beta-D-hexosaminides.. Its pathway is cell wall biogenesis; peptidoglycan recycling. Plays a role in peptidoglycan recycling by cleaving the terminal beta-1,4-linked N-acetylglucosamine (GlcNAc) from peptide-linked peptidoglycan fragments, giving rise to free GlcNAc, anhydro-N-acetylmuramic acid and anhydro-N-acetylmuramic acid-linked peptides. The chain is Beta-hexosaminidase from Xanthomonas axonopodis pv. citri (strain 306).